Reading from the N-terminus, the 398-residue chain is Inositol polyphosphate 5-phosphatase (398 aa).

It belongs to the inositol 1,4,5-trisphosphate 5-phosphatase type II family. Expressed in tail, cilia, dendrites, axon and male head.

It localises to the cytoplasm. Dephosphorylates a number of phosphatidylinositols. Controls the cellular levels and subcellular distribution of phosphatidylinositol 3,5-bisphosphate and phosphatidylinositol 3,4,5-trisphosphate. Has a role in sperm activation and motility. Influences the localization of the transient receptor potential polycystin (TRPP) complex proteins lov-1 and pkd-2. This Caenorhabditis elegans protein is Inositol polyphosphate 5-phosphatase.